The primary structure comprises 108 residues: Cytochrome c (108 aa).

Residues Cys19, Cys22, His23, and Met85 each coordinate heme c.

This sequence belongs to the cytochrome c family. Binds 1 heme c group covalently per subunit.

The protein localises to the mitochondrion intermembrane space. Its function is as follows. Electron carrier protein. The oxidized form of the cytochrome c heme group can accept an electron from the heme group of the cytochrome c1 subunit of cytochrome reductase. Cytochrome c then transfers this electron to the cytochrome oxidase complex, the final protein carrier in the mitochondrial electron-transport chain. The polypeptide is Cytochrome c (Cochliobolus lunatus (Filamentous fungus)).